Reading from the N-terminus, the 76-residue chain is uncharacterized protein (76 aa).

Positions 1–24 (MPLRLCQGRKDRASDPVRDDGSPP) are disordered. Basic and acidic residues predominate over residues 8–22 (GRKDRASDPVRDDGS).

This is an uncharacterized protein from Dryophytes versicolor (chameleon treefrog).